The chain runs to 65 residues: Conotoxin Am6.4 (65 aa).

The disordered stretch occupies residues 1–33 (STGKRNAGKLTVTDDVEADRDTDPDDKDPSVHN). Residues 1 to 36 (STGKRNAGKLTVTDDVEADRDTDPDDKDPSVHNSWR) constitute a propeptide that is removed on maturation. The span at 14–26 (DDVEADRDTDPDD) shows a compositional bias: acidic residues. Intrachain disulfides connect Cys-40/Cys-50, Cys-45/Cys-59, and Cys-49/Cys-64.

In terms of processing, is not hydroxylated. Expressed by the venom duct.

It localises to the secreted. Probable toxin that inhibits ion channels. In Conus amadis (Amadis cone), this protein is Conotoxin Am6.4.